A 460-amino-acid polypeptide reads, in one-letter code: Decaprenylphosphoryl-beta-D-ribose oxidase (460 aa).

The FAD-binding PCMH-type domain occupies 19–193; sequence TAPTVASVLS…LRATIEMTPT (175 aa). Residues 52–62, glycine 116, 121–124, 128–131, isoleucine 183, and tyrosine 414 each bind FAD; these read ARGLGRSYGDN, TVGG, and CDIH.

The protein belongs to the DprE1 family. As to quaternary structure, monomer. Interacts with DprE2 to form an epimerase complex.

The protein resides in the periplasm. The enzyme catalyses trans,octa-cis-decaprenylphospho-beta-D-ribofuranose + FAD + H(+) = trans,octa-cis-decaprenylphospho-beta-D-erythro-pentofuranosid-2-ulose + FADH2. It functions in the pathway cell wall biogenesis; cell wall polysaccharide biosynthesis. Its activity is regulated as follows. Is inhibited by 8-nitro-benzothiazinones (BTZs) such as BTZ043; BTZs are a new class of antimycobacterial agents that block formation of both cell-wall lipoarabinomannan and arabinogalactan via inhibition of decaprenyl-phospho-arabinose (DPA) synthesis. BTZs are suicide inhibitors that act via covalent modification of DprE1; the essential nitro group of these compounds is reduced by DprE1 to a nitroso group, which then specifically reacts with Cys-386 of DprE1 to form an irreversible semimercaptal adduct. Other compounds with diverse scaffolds (dinitrobenzamides and nitrobenzoquinoxalines) also act as covalent DprE1 inhibitors. Functionally, component of the DprE1-DprE2 complex that catalyzes the 2-step epimerization of decaprenyl-phospho-ribose (DPR) to decaprenyl-phospho-arabinose (DPA), a key precursor that serves as the arabinose donor required for the synthesis of cell-wall arabinans. DprE1 catalyzes the first step of epimerization, namely FAD-dependent oxidation of the C2' hydroxyl of DPR to yield the keto intermediate decaprenyl-phospho-2'-keto-D-arabinose (DPX). The intermediate DPX is then transferred to DprE2 subunit of the epimerase complex, most probably through a 'substrate channel' at the interface of DprE1-DprE2 complex. Can also use farnesyl-phosphoryl-beta-D-ribofuranose (FPR) as substrate in vitro. Appears to be essential for the growth of M.smegmatis. The polypeptide is Decaprenylphosphoryl-beta-D-ribose oxidase (Mycolicibacterium smegmatis (strain ATCC 700084 / mc(2)155) (Mycobacterium smegmatis)).